The chain runs to 205 residues: Dihydrofolate reductase (205 aa).

The 201-residue stretch at 1-201 (MLALVVALAS…TSFKMFLYTK (201 aa)) folds into the DHFR domain. Residues Ala7 and 13-19 (GIGNANA) each bind NADP(+). Residue 29 to 34 (DMAWFR) coordinates substrate. 62–64 (RRT) contributes to the NADP(+) binding site. Residue Arg78 coordinates substrate. NADP(+) is bound by residues 84–86 (SRG) and 118–125 (GGRDVYSL).

The protein belongs to the dihydrofolate reductase family.

The enzyme catalyses (6S)-5,6,7,8-tetrahydrofolate + NADP(+) = 7,8-dihydrofolate + NADPH + H(+). It participates in cofactor biosynthesis; tetrahydrofolate biosynthesis; 5,6,7,8-tetrahydrofolate from 7,8-dihydrofolate: step 1/1. Key enzyme in folate metabolism. Catalyzes an essential reaction for de novo glycine and purine synthesis, and for DNA precursor synthesis. This chain is Dihydrofolate reductase (DHFR-1), found in Encephalitozoon cuniculi (strain GB-M1) (Microsporidian parasite).